The sequence spans 127 residues: Small ribosomal subunit protein uS13 (127 aa).

The disordered stretch occupies residues H92–K127. Basic residues predominate over residues Q101–K127.

Belongs to the universal ribosomal protein uS13 family. In terms of assembly, part of the 30S ribosomal subunit. Forms a loose heterodimer with protein S19. Forms two bridges to the 50S subunit in the 70S ribosome.

Located at the top of the head of the 30S subunit, it contacts several helices of the 16S rRNA. In the 70S ribosome it contacts the 23S rRNA (bridge B1a) and protein L5 of the 50S subunit (bridge B1b), connecting the 2 subunits; these bridges are implicated in subunit movement. Contacts the tRNAs in the A and P-sites. The protein is Small ribosomal subunit protein uS13 of Gloeothece citriformis (strain PCC 7424) (Cyanothece sp. (strain PCC 7424)).